We begin with the raw amino-acid sequence, 421 residues long: Medium-chain specific acyl-CoA dehydrogenase, mitochondrial (421 aa).

Residues 1–25 (MAAALRRGYKVLRSVSHFECRAQHT) constitute a mitochondrion transit peptide. Residue Lys-69 is modified to N6-acetyllysine; alternate. At Lys-69 the chain carries N6-succinyllysine; alternate. Lys-79 carries the post-translational modification N6-acetyllysine. 158–167 (YCVTEPSAGS) lines the FAD pocket. Ser-167 is an octanoyl-CoA binding site. The residue at position 179 (Lys-179) is an N6-succinyllysine. An FAD-binding site is contributed by 191–193 (WIT). Position 212 is an N6-acetyllysine; alternate (Lys-212). Lys-212 carries the N6-succinyllysine; alternate modification. Ser-216 is an octanoyl-CoA binding site. Residues Lys-217, Lys-259, and Lys-271 each carry the N6-acetyllysine; alternate modification. 3 positions are modified to N6-succinyllysine; alternate: Lys-217, Lys-259, and Lys-271. Asp-278 and Arg-281 together coordinate octanoyl-CoA. Lys-301 carries the post-translational modification N6-acetyllysine. FAD is bound by residues 306–308 (RKT) and 316–317 (HQ). Positions 349 and 351 each coordinate octanoyl-CoA. Thr-351 is modified (phosphothreonine). An FAD-binding site is contributed by 374 to 378 (QIFGG). Glu-401 lines the octanoyl-CoA pocket. The Proton acceptor role is filled by Glu-401. 402-405 (GTAQ) contributes to the FAD binding site.

Belongs to the acyl-CoA dehydrogenase family. In terms of assembly, homotetramer. Interacts with the heterodimeric electron transfer flavoprotein ETF. The cofactor is FAD. Acetylated. Could occur at proximity of the cofactor-binding sites and reduce the catalytic activity. Could be deacetylated by SIRT3.

It is found in the mitochondrion matrix. The catalysed reaction is a medium-chain 2,3-saturated fatty acyl-CoA + oxidized [electron-transfer flavoprotein] + H(+) = a medium-chain (2E)-enoyl-CoA + reduced [electron-transfer flavoprotein]. The enzyme catalyses pentanoyl-CoA + oxidized [electron-transfer flavoprotein] + H(+) = (2E)-pentenoyl-CoA + reduced [electron-transfer flavoprotein]. It catalyses the reaction hexanoyl-CoA + oxidized [electron-transfer flavoprotein] + H(+) = (2E)-hexenoyl-CoA + reduced [electron-transfer flavoprotein]. It carries out the reaction octanoyl-CoA + oxidized [electron-transfer flavoprotein] + H(+) = (2E)-octenoyl-CoA + reduced [electron-transfer flavoprotein]. The catalysed reaction is decanoyl-CoA + oxidized [electron-transfer flavoprotein] + H(+) = (2E)-decenoyl-CoA + reduced [electron-transfer flavoprotein]. The enzyme catalyses dodecanoyl-CoA + oxidized [electron-transfer flavoprotein] + H(+) = (2E)-dodecenoyl-CoA + reduced [electron-transfer flavoprotein]. It catalyses the reaction tetradecanoyl-CoA + oxidized [electron-transfer flavoprotein] + H(+) = (2E)-tetradecenoyl-CoA + reduced [electron-transfer flavoprotein]. It carries out the reaction oxidized [electron-transfer flavoprotein] + hexadecanoyl-CoA + H(+) = (2E)-hexadecenoyl-CoA + reduced [electron-transfer flavoprotein]. Its pathway is lipid metabolism; mitochondrial fatty acid beta-oxidation. Medium-chain specific acyl-CoA dehydrogenase is one of the acyl-CoA dehydrogenases that catalyze the first step of mitochondrial fatty acid beta-oxidation, an aerobic process breaking down fatty acids into acetyl-CoA and allowing the production of energy from fats. The first step of fatty acid beta-oxidation consists in the removal of one hydrogen from C-2 and C-3 of the straight-chain fatty acyl-CoA thioester, resulting in the formation of trans-2-enoyl-CoA. Electron transfer flavoprotein (ETF) is the electron acceptor that transfers electrons to the main mitochondrial respiratory chain via ETF-ubiquinone oxidoreductase (ETF dehydrogenase). Among the different mitochondrial acyl-CoA dehydrogenases, medium-chain specific acyl-CoA dehydrogenase acts specifically on acyl-CoAs with saturated 6 to 12 carbons long primary chains. The chain is Medium-chain specific acyl-CoA dehydrogenase, mitochondrial from Rattus norvegicus (Rat).